The primary structure comprises 206 residues: dITP/XTP pyrophosphatase (206 aa).

Position 7–12 (7–12 (SSHGYK)) interacts with substrate. D70 serves as the catalytic Proton acceptor. D70 contributes to the Mg(2+) binding site. Substrate-binding positions include T71, 154 to 157 (FGYD), K177, and 182 to 183 (HR).

Belongs to the HAM1 NTPase family. Homodimer. Requires Mg(2+) as cofactor.

The enzyme catalyses XTP + H2O = XMP + diphosphate + H(+). It catalyses the reaction dITP + H2O = dIMP + diphosphate + H(+). It carries out the reaction ITP + H2O = IMP + diphosphate + H(+). Functionally, pyrophosphatase that catalyzes the hydrolysis of nucleoside triphosphates to their monophosphate derivatives, with a high preference for the non-canonical purine nucleotides XTP (xanthosine triphosphate), dITP (deoxyinosine triphosphate) and ITP. Seems to function as a house-cleaning enzyme that removes non-canonical purine nucleotides from the nucleotide pool, thus preventing their incorporation into DNA/RNA and avoiding chromosomal lesions. The chain is dITP/XTP pyrophosphatase from Chlamydia pneumoniae (Chlamydophila pneumoniae).